Reading from the N-terminus, the 1013-residue chain is RNA-binding protein 44 (1013 aa).

Disordered stretches follow at residues 1–25 and 56–94; these read MQATAALETDSDKNYPKNGGHFQND and LATEERASDKENSIVDQRDLSELSFSENQDSNRGNIFSQ. Over residues 56–76 the composition is skewed to basic and acidic residues; the sequence is LATEERASDKENSIVDQRDLS. Residues 78-94 are compositionally biased toward polar residues; it reads LSFSENQDSNRGNIFSQ. Serine 365, serine 368, serine 510, serine 681, and serine 688 each carry phosphoserine. Positions 792 to 865 constitute an RRM domain; sequence FLIHVGGLCP…KSVTVRLVKI (74 aa). Residues 905 to 925 are disordered; sequence RAKSRQLESEQDSEFPPLDQG.

Homodimer. Interacts with TEX14. Highly expressed in testis. Also expressed in other tissues at lower level.

It localises to the cytoplasm. In terms of biological role, component of intercellular bridges during meiosis. Intercellular bridges are evolutionarily conserved structures that connect differentiating germ cells. Not required for fertility. This chain is RNA-binding protein 44 (Rbm44), found in Mus musculus (Mouse).